We begin with the raw amino-acid sequence, 363 residues long: uncharacterized protein (363 aa).

Belongs to the TelA family.

This is an uncharacterized protein from Bacillus subtilis (strain 168).